The sequence spans 194 residues: Protein GrpE (194 aa).

Positions 1 to 24 (MEEKDKEEKVTGENLEPEDKNLEQ) are enriched in basic and acidic residues. The tract at residues 1–41 (MEEKDKEEKVTGENLEPEDKNLEQEDKEEVVGPQEEQQIDE) is disordered.

Belongs to the GrpE family. Homodimer.

Its subcellular location is the cytoplasm. In terms of biological role, participates actively in the response to hyperosmotic and heat shock by preventing the aggregation of stress-denatured proteins, in association with DnaK and GrpE. It is the nucleotide exchange factor for DnaK and may function as a thermosensor. Unfolded proteins bind initially to DnaJ; upon interaction with the DnaJ-bound protein, DnaK hydrolyzes its bound ATP, resulting in the formation of a stable complex. GrpE releases ADP from DnaK; ATP binding to DnaK triggers the release of the substrate protein, thus completing the reaction cycle. Several rounds of ATP-dependent interactions between DnaJ, DnaK and GrpE are required for fully efficient folding. This is Protein GrpE from Carboxydothermus hydrogenoformans (strain ATCC BAA-161 / DSM 6008 / Z-2901).